The primary structure comprises 473 residues: O-methyltransferase aclU (473 aa).

Residues Asp320 and 354 to 356 (GDF) each bind S-adenosyl-L-methionine. His373 acts as the Proton acceptor in catalysis.

It belongs to the class I-like SAM-binding methyltransferase superfamily. Cation-independent O-methyltransferase family. COMT subfamily.

Its pathway is mycotoxin biosynthesis. Its function is as follows. O-methyltransferase; part of the gene cluster that mediates the biosynthesis of aspirochlorine (or antibiotic A30641), an unusual halogenated spiro compound with distinctive antifungal properties due to selective inhibition of protein biosynthesis, and which is also active against bacteria, viruses, and murine tumor cells. The non-ribosomal peptide synthetase (NRPS) aclP is responsible the formation of the diketopiperazine (DKP) core from the condensation of 2 phenylalanine residues. One Phe residue is tailored into chlorotyrosine by hydroxylation and chlorination, whereas the second Phe undergoes an unprecedented C-C bond cleavage to be converted into glycine. After formation of the DKP, sulfur is incorporated into the DKP by conjugation with glutathione by aclG, followed by its stepwise degradation to the thiol by aclI, aclJ and aclK, and the dithiol oxidation by aclT. In addition, oxygenases (aclB, aclC, aclL and aclO) and O-methyltransferases (aclM and aclU) act as tailoring enzymes to produce the intermediate dechloroaspirochlorine. Ultimately, chlorination of dechloroaspirochlorine by the halogenase aclH is the last step in the aspirochlorine pathway. This chain is O-methyltransferase aclU, found in Aspergillus oryzae (strain ATCC 42149 / RIB 40) (Yellow koji mold).